The sequence spans 222 residues: Large ribosomal subunit protein uL4 (222 aa).

Positions 50 to 72 (TRGRSEVSHSTRKPFRQKGTGNA) are disordered.

Belongs to the universal ribosomal protein uL4 family. As to quaternary structure, part of the 50S ribosomal subunit.

Functionally, one of the primary rRNA binding proteins, this protein initially binds near the 5'-end of the 23S rRNA. It is important during the early stages of 50S assembly. It makes multiple contacts with different domains of the 23S rRNA in the assembled 50S subunit and ribosome. Its function is as follows. Forms part of the polypeptide exit tunnel. This chain is Large ribosomal subunit protein uL4, found in Chlamydia muridarum (strain MoPn / Nigg).